We begin with the raw amino-acid sequence, 310 residues long: Zinc finger protein 42 homolog (310 aa).

Residues 1–15 show a composition bias toward basic residues; sequence MSQQLKKRAKTRHQK. The disordered stretch occupies residues 1 to 35; that stretch reads MSQQLKKRAKTRHQKGLGGRAPSGAKPRQGKSSQD. 4 consecutive C2H2-type zinc fingers follow at residues 188 to 212, 217 to 239, 245 to 269, and 275 to 299; these read IACP…LLIH, HVCA…FLVH, FRCT…VRIH, and FVCP…ILTH. Glycyl lysine isopeptide (Lys-Gly) (interchain with G-Cter in ubiquitin) cross-links involve residues Lys231 and Lys233.

This sequence belongs to the krueppel C2H2-type zinc-finger protein family. Post-translationally, polyubiquitinated by RNF12, leading to proteasomal degradation. In terms of tissue distribution, expressed in kidney, epidermal keratinocytes, prostate epithelial cells, bronchial and small airway lung epithelial cells (at protein level). Expressed in malignant kidney and several carcinoma cell lines (at protein level). Expressed in embryonic stem cells, kidney, epidermal keratinocytes, prostate epithelial cells, bronchial and small airway lung epithelial cells. Expressed in embryonal carcinomas, seminomas, malignant kidney and several carcinoma cell lines.

Its subcellular location is the nucleus. Functionally, involved in the reprogramming of X-chromosome inactivation during the acquisition of pluripotency. Required for efficient elongation of TSIX, a non-coding RNA antisense to XIST. Binds DXPas34 enhancer within the TSIX promoter. Involved in ES cell self-renewal. In Homo sapiens (Human), this protein is Zinc finger protein 42 homolog (ZFP42).